Consider the following 346-residue polypeptide: LRP2-binding protein (346 aa).

Residues 58-91 (AMAYFLRGQLYFEEGWYEEALAQFEEIQEKDHQA) form a TPR repeat. 6 Sel1-like repeats span residues 92 to 124 (IYQLGVMYYDGLGTIANAEKGVNYMRKILDSSC), 132 to 167 (FAAAYNLGRAYFEGKGVKRSDEEAERLWLLAADNGN), 172 to 205 (VKAQSILGLFYSMKEPKELEKAFFWHSEACGNGS), 206 to 241 (LESQGALGLMYFYGQGIRQDTDAALHCLREAAERGN), 242 to 276 (VYAQGTLVEYYYKMKFFTKCVSFSKRIADYDEVHD), and 296 to 331 (AMAAFYHGRCLQLGLGIMKDEESAKHYYSKACRLNP).

Interacts with LRP2.

The protein resides in the cytoplasm. Functionally, may act as an adapter that regulates LRP2 function. This Mus musculus (Mouse) protein is LRP2-binding protein (Lrp2bp).